The primary structure comprises 204 residues: Thymidylate kinase (204 aa).

Residue 9–16 (GLDGAGKS) participates in ATP binding.

Belongs to the thymidylate kinase family.

It carries out the reaction dTMP + ATP = dTDP + ADP. Functionally, phosphorylation of dTMP to form dTDP in both de novo and salvage pathways of dTTP synthesis. This Francisella philomiragia subsp. philomiragia (strain ATCC 25017 / CCUG 19701 / FSC 153 / O#319-036) protein is Thymidylate kinase.